A 422-amino-acid chain; its full sequence is Adhesin YadA (422 aa).

Residues 1–25 form the signal peptide; the sequence is MTKDFKISVSAALISALFSSPYAFA. The tract at residues 26–330 is surface exposed passenger domain; sequence NNDEVHFTAV…KKAIRESNQY (305 aa). The stretch at 206-236 forms a coiled coil; it reads VNVAQLKKEIEKTQVNANKKSAEVLGIANNY. Positions 331–368 are outer membrane translocation of the passenger domain; it reads TDHKFRQLDNRLDKLDTRVDKGLASSAALNSLFQPYGV. 4 consecutive transmembrane segments (beta stranded) span residues 369–379, 383–394, 401–407, and 411–422; these read GKVNFTAGVGG, SQALAIGSGYRV, KAGVAYA, and DVMYNASFNIEW. The segment at 369 to 422 is translocator domain; the sequence is GKVNFTAGVGGYRSSQALAIGSGYRVNESVALKAGVAYAGSSDVMYNASFNIEW.

This sequence belongs to the autotransporter-2 (AT-2) (TC 1.B.40) family. As to quaternary structure, homotrimer; trimers are very stable, not disrupted by heating at 95 degrees Celsius for 10 minutes in SDS sample buffer.

The protein localises to the cell surface. The protein resides in the cell outer membrane. In terms of biological role, collagen-binding outer membrane protein forming a fibrillar matrix on the bacterial cell surface and phagocytosis resistance. Promotes initial attachment and invasion of eukaryotic cells. Also protects the bacteria by being responsible for agglutination, serum resistance and complement inactivation. Gly-389 plays an important role in this protein; replacing it with increasingly large polar residues decreases expression levels and trimer stability. Residues larger than Ser (Thr, Asn or His) significantly decrease serume resistance and bacterial autoagglution without affecting adhesion to host cells or host cell cytokine production. This is Adhesin YadA from Yersinia enterocolitica serotype O:8 / biotype 1B (strain NCTC 13174 / 8081).